The chain runs to 300 residues: ATP synthase gamma chain (300 aa).

This sequence belongs to the ATPase gamma chain family. As to quaternary structure, F-type ATPases have 2 components, CF(1) - the catalytic core - and CF(0) - the membrane proton channel. CF(1) has five subunits: alpha(3), beta(3), gamma(1), delta(1), epsilon(1). CF(0) has three main subunits: a, b and c.

The protein localises to the cell membrane. Produces ATP from ADP in the presence of a proton gradient across the membrane. The gamma chain is believed to be important in regulating ATPase activity and the flow of protons through the CF(0) complex. This is ATP synthase gamma chain from Acidothermus cellulolyticus (strain ATCC 43068 / DSM 8971 / 11B).